The sequence spans 286 residues: Bifunctional protein FolD (286 aa).

Residues glycine 165 to serine 167, serine 190, and valine 231 each bind NADP(+).

This sequence belongs to the tetrahydrofolate dehydrogenase/cyclohydrolase family. Homodimer.

The enzyme catalyses (6R)-5,10-methylene-5,6,7,8-tetrahydrofolate + NADP(+) = (6R)-5,10-methenyltetrahydrofolate + NADPH. It carries out the reaction (6R)-5,10-methenyltetrahydrofolate + H2O = (6R)-10-formyltetrahydrofolate + H(+). Its pathway is one-carbon metabolism; tetrahydrofolate interconversion. Catalyzes the oxidation of 5,10-methylenetetrahydrofolate to 5,10-methenyltetrahydrofolate and then the hydrolysis of 5,10-methenyltetrahydrofolate to 10-formyltetrahydrofolate. The chain is Bifunctional protein FolD from Bacillus cereus (strain G9842).